Consider the following 430-residue polypeptide: Adenylosuccinate synthetase (430 aa).

GTP is bound by residues 13-19 (GDEGKGK) and 41-43 (GHT). Asp-14 acts as the Proton acceptor in catalysis. The Mg(2+) site is built by Asp-14 and Gly-41. IMP contacts are provided by residues 14-17 (DEGK), 39-42 (NAGH), Thr-130, Arg-144, Gln-225, Thr-240, and Arg-304. Residue His-42 is the Proton donor of the active site. Residue 300–306 (STTGRAR) coordinates substrate. Residues Arg-306, 332 to 334 (KLD), and 414 to 416 (STG) each bind GTP.

It belongs to the adenylosuccinate synthetase family. Homodimer. It depends on Mg(2+) as a cofactor.

It localises to the cytoplasm. The enzyme catalyses IMP + L-aspartate + GTP = N(6)-(1,2-dicarboxyethyl)-AMP + GDP + phosphate + 2 H(+). It functions in the pathway purine metabolism; AMP biosynthesis via de novo pathway; AMP from IMP: step 1/2. Functionally, plays an important role in the de novo pathway of purine nucleotide biosynthesis. Catalyzes the first committed step in the biosynthesis of AMP from IMP. The protein is Adenylosuccinate synthetase of Azotobacter vinelandii (strain DJ / ATCC BAA-1303).